Reading from the N-terminus, the 156-residue chain is Ribosomal RNA large subunit methyltransferase H (156 aa).

Residues Leu73, Gly104, and 123-128 (LSPLTL) contribute to the S-adenosyl-L-methionine site.

This sequence belongs to the RNA methyltransferase RlmH family. As to quaternary structure, homodimer.

It is found in the cytoplasm. It catalyses the reaction pseudouridine(1915) in 23S rRNA + S-adenosyl-L-methionine = N(3)-methylpseudouridine(1915) in 23S rRNA + S-adenosyl-L-homocysteine + H(+). Its function is as follows. Specifically methylates the pseudouridine at position 1915 (m3Psi1915) in 23S rRNA. The protein is Ribosomal RNA large subunit methyltransferase H of Yersinia enterocolitica serotype O:8 / biotype 1B (strain NCTC 13174 / 8081).